A 210-amino-acid chain; its full sequence is FMN-dependent NADH:quinone oxidoreductase 8 (210 aa).

Residues Ser-10 and Ser-16 to Ser-18 contribute to the FMN site.

Belongs to the azoreductase type 1 family. As to quaternary structure, homodimer. FMN serves as cofactor.

It catalyses the reaction 2 a quinone + NADH + H(+) = 2 a 1,4-benzosemiquinone + NAD(+). The catalysed reaction is N,N-dimethyl-1,4-phenylenediamine + anthranilate + 2 NAD(+) = 2-(4-dimethylaminophenyl)diazenylbenzoate + 2 NADH + 2 H(+). Its function is as follows. Quinone reductase that provides resistance to thiol-specific stress caused by electrophilic quinones. Functionally, also exhibits azoreductase activity. Catalyzes the reductive cleavage of the azo bond in aromatic azo compounds to the corresponding amines. This chain is FMN-dependent NADH:quinone oxidoreductase 8, found in Burkholderia lata (strain ATCC 17760 / DSM 23089 / LMG 22485 / NCIMB 9086 / R18194 / 383).